The following is a 489-amino-acid chain: Blue-light-activated histidine kinase (489 aa).

The region spanning 19-93 (ATDPFRAAVE…AIKSAIAAEK (75 aa)) is the PAS domain. Position 69 is an S-4a-FMN cysteine (C69). PAC domains lie at 93–147 (KPID…ELEK) and 232–281 (YSIE…NKAL). Positions 259–341 (NPLVLGIVQD…LLKENWAGAT (83 aa)) are HWE histidine kinase domain. Residue H288 is modified to Phosphohistidine; by autocatalysis.

Post-translationally, FMN binds covalently to cysteine after exposure to blue light and this bond is spontaneously broken in the dark.

It carries out the reaction ATP + protein L-histidine = ADP + protein N-phospho-L-histidine.. Functionally, photosensitive kinase that is involved in increased bacterial virulence upon exposure to light. Once ejected from an infected animal host, sunlight acts as an environmental signal that increases the virulence of the bacterium, preparing it for infection of the next host. This photoreceptor protein is directly related to the bacterium's survival and replication within host macrophages, as it is required for optimal replication of bacteria inside macrophages. The polypeptide is Blue-light-activated histidine kinase (Brucella abortus (strain 2308)).